A 933-amino-acid polypeptide reads, in one-letter code: Exosome complex exonuclease RRP44 homolog A (933 aa).

The PINc domain maps to Lys-50 to Arg-163. Residues Gln-217–Asn-321 form the CSD1 domain. A disordered region spans residues Ala-296–Arg-336. Residues Ala-371–Asp-438 enclose the CSD2 domain. The RNB domain occupies Arg-469–Leu-798. Asp-481 and Asp-490 together coordinate Mg(2+).

This sequence belongs to the RNR ribonuclease family. Probable component of the RNA exosome complex. Requires Mg(2+) as cofactor.

It is found in the nucleus. Its function is as follows. Catalytic component of the RNA exosome complex which has 3'-&gt;5' exoribonuclease activity and participates in a multitude of cellular RNA processing and degradation events. Required for 5.8S rRNA intermediate processing and the degradation of 5' external transcribed spacer (5' ETS), a maturation by-product of rRNA synthesis. Is not involved in the degradation of turnip crinkle virus (TCV) RNA and significant virus resistance. Required for normal development of female gametophytes and early embryogenesis. In Arabidopsis thaliana (Mouse-ear cress), this protein is Exosome complex exonuclease RRP44 homolog A.